Consider the following 46-residue polypeptide: Iota-conotoxin-like R11.7 (46 aa).

A 4-hydroxyproline mark is found at proline 2 and proline 11. Intrachain disulfides connect cysteine 5–cysteine 19, cysteine 12–cysteine 22, cysteine 18–cysteine 27, and cysteine 21–cysteine 38. 4-hydroxyproline is present on proline 29. Position 44 is a D-phenylalanine (phenylalanine 44).

It belongs to the conotoxin I1 superfamily. As to expression, expressed by the venom duct.

The protein localises to the secreted. In terms of biological role, iota-conotoxins bind to voltage-gated sodium channels (Nav) and act as agonists by shifting the voltage-dependence of activation to more hyperpolarized levels. Produces general excitatory symptoms. The sequence is that of Iota-conotoxin-like R11.7 from Conus radiatus (Rayed cone).